The sequence spans 296 residues: tRNA dimethylallyltransferase (296 aa).

Glycine 11–threonine 18 serves as a coordination point for ATP. Threonine 13–threonine 18 is a binding site for substrate. The interaction with substrate tRNA stretch occupies residues aspartate 36–glutamine 39.

It belongs to the IPP transferase family. As to quaternary structure, monomer. It depends on Mg(2+) as a cofactor.

The catalysed reaction is adenosine(37) in tRNA + dimethylallyl diphosphate = N(6)-dimethylallyladenosine(37) in tRNA + diphosphate. Functionally, catalyzes the transfer of a dimethylallyl group onto the adenine at position 37 in tRNAs that read codons beginning with uridine, leading to the formation of N6-(dimethylallyl)adenosine (i(6)A). The sequence is that of tRNA dimethylallyltransferase from Streptococcus equi subsp. equi (strain 4047).